Consider the following 421-residue polypeptide: UDP-N-acetylglucosamine 1-carboxyvinyltransferase (421 aa).

A phosphoenolpyruvate-binding site is contributed by 22–23; sequence KN. R95 lines the UDP-N-acetyl-alpha-D-glucosamine pocket. Residue C119 is the Proton donor of the active site. The residue at position 119 (C119) is a 2-(S-cysteinyl)pyruvic acid O-phosphothioketal. UDP-N-acetyl-alpha-D-glucosamine contacts are provided by residues 124–128, D309, and I331; that span reads RPVDQ.

Belongs to the EPSP synthase family. MurA subfamily.

It is found in the cytoplasm. It carries out the reaction phosphoenolpyruvate + UDP-N-acetyl-alpha-D-glucosamine = UDP-N-acetyl-3-O-(1-carboxyvinyl)-alpha-D-glucosamine + phosphate. The protein operates within cell wall biogenesis; peptidoglycan biosynthesis. In terms of biological role, cell wall formation. Adds enolpyruvyl to UDP-N-acetylglucosamine. The chain is UDP-N-acetylglucosamine 1-carboxyvinyltransferase from Leptothrix cholodnii (strain ATCC 51168 / LMG 8142 / SP-6) (Leptothrix discophora (strain SP-6)).